We begin with the raw amino-acid sequence, 271 residues long: Glutamate racemase (271 aa).

Residues 10 to 11 (DS) and 42 to 43 (YG) each bind substrate. C74 serves as the catalytic Proton donor/acceptor. 75-76 (NT) is a substrate binding site. C189 (proton donor/acceptor) is an active-site residue. Substrate is bound at residue 190–191 (TH).

It belongs to the aspartate/glutamate racemases family.

The catalysed reaction is L-glutamate = D-glutamate. The protein operates within cell wall biogenesis; peptidoglycan biosynthesis. Its function is as follows. Provides the (R)-glutamate required for cell wall biosynthesis. In Bartonella bacilliformis (strain ATCC 35685 / KC583 / Herrer 020/F12,63), this protein is Glutamate racemase.